A 679-amino-acid chain; its full sequence is Glycine--tRNA ligase beta subunit (679 aa).

The protein belongs to the class-II aminoacyl-tRNA synthetase family. As to quaternary structure, tetramer of two alpha and two beta subunits.

Its subcellular location is the cytoplasm. It carries out the reaction tRNA(Gly) + glycine + ATP = glycyl-tRNA(Gly) + AMP + diphosphate. In Streptococcus mutans serotype c (strain ATCC 700610 / UA159), this protein is Glycine--tRNA ligase beta subunit.